Consider the following 689-residue polypeptide: MSEKTFLVEIGTEELPPKALRSLAESFAANFTAELDNAGLAHGTVQWFAAPRRLALKVANLAEAQPDREIEKRGPAIAQAFDAEGKPSKAAEGWARGCGITVDQAERLTTDKGEWLLYRAHVKGESTEALLPNMVATSLAKLPIPKLMRWGASDVHFVRPVHTVTLLLGDKVIPATILGIQSDRVIRGHRFMGEPEFTIDNADQYPEILRERGKVIADYEERKAKIKADAEEAARKIGGNADLSESLLEEVASLVEWPVVLTAKFEEKFLAVPAEALVYTMKGDQKYFPVYANDGKLLPNFIFVANIESKDPQQIISGNEKVVRPRLADAEFFFNTDRKKRLEDNLPRLQTVLFQQQLGTLRDKTDRIQALAGWIAEQIGADVNHATRAGLLSKCDLMTNMVFEFTDTQGVMGMHYARHDGEAEDVAVALNEQYQPRFAGDDLPSNPVACALAIADKMDTLAGIFGIGQHPKGDKDPFALRRAALGVLRIIVEKNLNLDLQTLTEEAVRLYGDKLTNANVVDDVIDFMLGRFRAWYQDEGYTVDTIQAVLARRPTRPADFDARMKAVSHFRTLDAAAALAAANKRVSNILAKSDEVLSDRVNASTLKEPEEIKLAMQVVVLRDKLEPYFAEGRYQDALVELAELREPVDAFFDKVMVMVDDKELRLNRLTMLEKLRELFLRVADISLLQ.

This sequence belongs to the class-II aminoacyl-tRNA synthetase family. Tetramer of two alpha and two beta subunits.

It is found in the cytoplasm. The enzyme catalyses tRNA(Gly) + glycine + ATP = glycyl-tRNA(Gly) + AMP + diphosphate. The polypeptide is Glycine--tRNA ligase beta subunit (Escherichia coli O139:H28 (strain E24377A / ETEC)).